We begin with the raw amino-acid sequence, 645 residues long: Fructose-1,6-bisphosphatase class 3 (645 aa).

It belongs to the FBPase class 3 family. The cofactor is Mn(2+).

The enzyme catalyses beta-D-fructose 1,6-bisphosphate + H2O = beta-D-fructose 6-phosphate + phosphate. It functions in the pathway carbohydrate biosynthesis; gluconeogenesis. The sequence is that of Fructose-1,6-bisphosphatase class 3 from Fusobacterium nucleatum subsp. nucleatum (strain ATCC 25586 / DSM 15643 / BCRC 10681 / CIP 101130 / JCM 8532 / KCTC 2640 / LMG 13131 / VPI 4355).